We begin with the raw amino-acid sequence, 222 residues long: Glutathione S-transferase (222 aa).

A GST N-terminal domain is found at 3 to 83 (GKPKLHYTRG…YIAGKYNLYG (81 aa)). Glutathione contacts are provided by residues Tyr9, Arg45, 54–55 (QV), and 67–68 (QS). Positions 85 to 208 (DLKERAWIDM…QPGSQRKPPL (124 aa)) constitute a GST C-terminal domain.

This sequence belongs to the GST superfamily. Alpha family. In terms of assembly, homodimer.

The protein localises to the cytoplasm. It catalyses the reaction RX + glutathione = an S-substituted glutathione + a halide anion + H(+). Functionally, conjugation of reduced glutathione to a wide number of exogenous and endogenous hydrophobic electrophiles. This chain is Glutathione S-transferase, found in Gallus gallus (Chicken).